A 226-amino-acid polypeptide reads, in one-letter code: Protein DEHYDRATION-INDUCED 19 (226 aa).

The tract at residues 158-208 is disordered; that stretch reads FPTSDTEETSKPPISIPDDASVIKETPAQPWDSSIDSSLTREEREQKRKQA. Residues 196-205 show a composition bias toward basic and acidic residues; that stretch reads LTREEREQKR.

The protein belongs to the Di19 family.

The polypeptide is Protein DEHYDRATION-INDUCED 19 (DI19-1) (Oryza sativa subsp. japonica (Rice)).